Reading from the N-terminus, the 75-residue chain is Probable protein BRICK1-B (75 aa).

Residues 41 to 72 (MSCRSRLATLNEKLTTLERRIEYIEARVTKGE) adopt a coiled-coil conformation.

Belongs to the BRK1 family.

The protein resides in the cytoplasm. Its subcellular location is the cytoskeleton. Its function is as follows. Involved in regulation of actin and microtubule organization. Part of a WAVE complex that activates the Arp2/3 complex. The protein is Probable protein BRICK1-B (brk1-b) of Xenopus laevis (African clawed frog).